A 302-amino-acid chain; its full sequence is 2-phosphoglycerate kinase (302 aa).

The 88-residue stretch at 2–89 (IKVIERDGKV…FWRRFRKLKI (88 aa)) folds into the ATP-cone domain.

This sequence belongs to the 2-phosphoglycerate kinase family. It depends on a divalent metal cation as a cofactor.

It carries out the reaction (2R)-2-phosphoglycerate + ATP = (2R)-2,3-bisphosphoglycerate + ADP + H(+). It functions in the pathway thermoadapter biosynthesis; cyclic 2,3-diphosphoglycerate biosynthesis; cyclic 2,3-diphosphoglycerate from 2-phospho-D-glycerate: step 1/2. In terms of biological role, catalyzes the phosphorylation of 2-phosphoglycerate to 2,3-diphosphoglycerate. Involved in the biosynthesis of cyclic 2,3-bisphosphoglycerate, a thermoprotectant. The polypeptide is 2-phosphoglycerate kinase (Pyrococcus furiosus (strain ATCC 43587 / DSM 3638 / JCM 8422 / Vc1)).